Here is a 177-residue protein sequence, read N- to C-terminus: Large ribosomal subunit protein uL6 (177 aa).

It belongs to the universal ribosomal protein uL6 family. As to quaternary structure, part of the 50S ribosomal subunit.

In terms of biological role, this protein binds to the 23S rRNA, and is important in its secondary structure. It is located near the subunit interface in the base of the L7/L12 stalk, and near the tRNA binding site of the peptidyltransferase center. The protein is Large ribosomal subunit protein uL6 of Rhodospirillum centenum (strain ATCC 51521 / SW).